The sequence spans 316 residues: Acetaldehyde dehydrogenase (316 aa).

13–16 provides a ligand contact to NAD(+); the sequence is SGNI. Cysteine 131 functions as the Acyl-thioester intermediate in the catalytic mechanism. NAD(+) is bound by residues 162–170 and asparagine 290; that span reads SAGPGTRAN.

This sequence belongs to the acetaldehyde dehydrogenase family.

The enzyme catalyses acetaldehyde + NAD(+) + CoA = acetyl-CoA + NADH + H(+). In terms of biological role, catalyzes the conversion of acetaldehyde to acetyl-CoA, using NAD(+) and coenzyme A. Is the final enzyme in the meta-cleavage pathway for the degradation of 2-aminophenol. This is Acetaldehyde dehydrogenase (amnH) from Pseudomonas sp.